A 425-amino-acid chain; its full sequence is Serine--tRNA ligase 2 (425 aa).

230 to 232 (TAE) is a binding site for L-serine. Residue 261–263 (REE) coordinates ATP. An L-serine-binding site is contributed by Glu-284. Residue 348 to 351 (EISS) coordinates ATP. Ser-383 contributes to the L-serine binding site.

This sequence belongs to the class-II aminoacyl-tRNA synthetase family. Type-1 seryl-tRNA synthetase subfamily. As to quaternary structure, homodimer. The tRNA molecule binds across the dimer.

Its subcellular location is the cytoplasm. The catalysed reaction is tRNA(Ser) + L-serine + ATP = L-seryl-tRNA(Ser) + AMP + diphosphate + H(+). The enzyme catalyses tRNA(Sec) + L-serine + ATP = L-seryl-tRNA(Sec) + AMP + diphosphate + H(+). It functions in the pathway aminoacyl-tRNA biosynthesis; selenocysteinyl-tRNA(Sec) biosynthesis; L-seryl-tRNA(Sec) from L-serine and tRNA(Sec): step 1/1. Its function is as follows. Catalyzes the attachment of serine to tRNA(Ser). Is also able to aminoacylate tRNA(Sec) with serine, to form the misacylated tRNA L-seryl-tRNA(Sec), which will be further converted into selenocysteinyl-tRNA(Sec). This is Serine--tRNA ligase 2 from Lactiplantibacillus plantarum (strain ATCC BAA-793 / NCIMB 8826 / WCFS1) (Lactobacillus plantarum).